The primary structure comprises 294 residues: ATP synthase gamma chain (294 aa).

This sequence belongs to the ATPase gamma chain family. As to quaternary structure, F-type ATPases have 2 components, CF(1) - the catalytic core - and CF(0) - the membrane proton channel. CF(1) has five subunits: alpha(3), beta(3), gamma(1), delta(1), epsilon(1). CF(0) has three main subunits: a, b and c.

It is found in the cell inner membrane. In terms of biological role, produces ATP from ADP in the presence of a proton gradient across the membrane. The gamma chain is believed to be important in regulating ATPase activity and the flow of protons through the CF(0) complex. The sequence is that of ATP synthase gamma chain from Caulobacter sp. (strain K31).